We begin with the raw amino-acid sequence, 205 residues long: Golgi apparatus membrane protein TVP23 homolog B (205 aa).

Residue Met1 is modified to N-acetylmethionine. Residues 1-21 (MLQQDSNDDTEDVSLFDAEEE) are disordered. A run of 4 helical transmembrane segments spans residues 34–53 (PVASFFHLFFRVSAIIVYLL), 54–72 (CGLLSSSFITCMVTIILLL), 126–146 (IFWLGLIACPVLWVIFAFSAL), and 152–172 (KWLAVVIMGVVLQGANLYGYI).

The protein belongs to the TVP23 family.

It is found in the membrane. This Homo sapiens (Human) protein is Golgi apparatus membrane protein TVP23 homolog B (TVP23B).